Here is a 279-residue protein sequence, read N- to C-terminus: Pantothenate synthetase (279 aa).

26-33 (MGNLHDGH) contributes to the ATP binding site. The Proton donor role is filled by histidine 33. Glutamine 57 lines the (R)-pantoate pocket. Glutamine 57 is a beta-alanine binding site. 144–147 (GKKD) contacts ATP. Glutamine 150 is a binding site for (R)-pantoate. 181 to 184 (LSSR) is an ATP binding site.

It belongs to the pantothenate synthetase family. As to quaternary structure, homodimer.

It is found in the cytoplasm. The catalysed reaction is (R)-pantoate + beta-alanine + ATP = (R)-pantothenate + AMP + diphosphate + H(+). Its pathway is cofactor biosynthesis; (R)-pantothenate biosynthesis; (R)-pantothenate from (R)-pantoate and beta-alanine: step 1/1. Its function is as follows. Catalyzes the condensation of pantoate with beta-alanine in an ATP-dependent reaction via a pantoyl-adenylate intermediate. This chain is Pantothenate synthetase, found in Janthinobacterium sp. (strain Marseille) (Minibacterium massiliensis).